A 270-amino-acid chain; its full sequence is HTH-type transcriptional activator AllS (270 aa).

Residues 4–61 (LDPETLRTFVSVAETGSFSRAAEKLYKTTATISYRIKLLEDNTGVALFSRTTRSVLLT) enclose the HTH lysR-type domain. Residues 21–40 (FSRAAEKLYKTTATISYRIK) constitute a DNA-binding region (H-T-H motif).

Belongs to the LysR transcriptional regulatory family.

Its function is as follows. Positive regulator essential for the expression of allD operon. Binds to the allD promoter. In Klebsiella pneumoniae, this protein is HTH-type transcriptional activator AllS (allS).